A 1083-amino-acid chain; its full sequence is Neisserial autotransporter lipoprotein NalP (1083 aa).

The first 27 residues, 1-27 (MRTTPTFPTKTFKPTAMALAVATTLSA), serve as a signal peptide directing secretion. A lipid anchor (N-palmitoyl cysteine) is attached at C28. C28 carries the S-diacylglycerol cysteine lipid modification. A Peptidase S8 domain is found at 111–483 (NDAYKNLINL…WGLLDAGKAM (373 aa)). Active-site charge relay system residues include D139, H211, and S427. The Autotransporter domain occupies 809–1083 (DGLDHNGTGL…SGRVGVGYRF (275 aa)). The next 12 beta stranded transmembrane spans lie at 819–828 (RVIAQTQQDG), 844–852 (TQTVGIAAK), 858–866 (TAAATLGMG), 883–891 (SLFAGIRHD), 897–906 (YLKGLFSYGR), 931–941 (QLGALGGVNVP), 948–958 (LTVEGGLRYDL), 984–994 (VGLAGLKLSQP), 1000–1010 (VLFATAGVERD), 1041–1052 (RLVAGLGADVEF), 1057–1066 (NGLARYSYAG), and 1074–1083 (SGRVGVGYRF).

This sequence belongs to the peptidase S8 family. In terms of processing, a fusion protein of the first 44 residues with beta-lactamase is lipidated in E.coli, strongly suggesting this is a lipoprotein in situ. The lipidated form is briefly retained on the cell surface which allows it to process its endogenous substrates on the cell surface before the passenger domain is released into the medium.

It localises to the cell outer membrane. The protein localises to the cell surface. It is found in the secreted. In terms of biological role, major human immunogenic protein. Autotransporter with a secreted protease domain involved in processing other autotransporter proteins including App and IgA. Probably autoprocesses to release the about 70 kDa passenger domain. Processes the lactoferrin receptor lipoprotein subunit (LbpB) extracellularly, releasing it from the cell surface. LbpB release protects bacteria against complement-mediated killing by anti-LbpB antibodies. Processes NHBA. Lipidation slows its auto-processing, probably allowing it to act on endogenous substrates on the cell surface before the passenger domain is released into the medium. The C-terminal beta-barrel domain inserts into the outer membrane where it probably exports the N-terminal passenger domain. Both the cell surface protein (Neisserial autotransporter lipoprotein NalP) and the passenger domain cleave human (host) complement factor C3, generating a shorter alpha chain and a longer beta chain than normal. Its function is as follows. Plays a role in extracellular-DNA (eDNA) mediated biofilm formation. In some strains (including cc32 strain H44/76 but not cc11 strain B16B6) eDNA stimulates biofilm formation. When NalP is not expressed (and no longer processes NHBA or IgA) biofilm formation increases. This is probably because the number of positively charged, DNA-binding peptides on the cell surface rises, resulting in increased biofilm formation. Functionally, cleaves human (host) complement factor C3, generating a shorter alpha chain and a longer beta chain than normal. Does not act on mouse or rabbit C3. Cleavage causes C3b degradation by human CFI and CFH, decreases deposition of C3b on the bacteria surface and probably facilitates complement escape. The sequence is that of Neisserial autotransporter lipoprotein NalP from Neisseria meningitidis serogroup B / serotype 15 (strain H44/76).